Reading from the N-terminus, the 266-residue chain is Putative carbamate hydrolase RutD (266 aa).

Belongs to the AB hydrolase superfamily. Hydrolase RutD family.

The catalysed reaction is carbamate + 2 H(+) = NH4(+) + CO2. Functionally, involved in pyrimidine catabolism. May facilitate the hydrolysis of carbamate, a reaction that can also occur spontaneously. This Escherichia coli O26:H11 (strain 11368 / EHEC) protein is Putative carbamate hydrolase RutD.